The following is a 186-amino-acid chain: Translation initiation factor IF-3 (186 aa).

Belongs to the IF-3 family. Monomer.

The protein localises to the cytoplasm. In terms of biological role, IF-3 binds to the 30S ribosomal subunit and shifts the equilibrium between 70S ribosomes and their 50S and 30S subunits in favor of the free subunits, thus enhancing the availability of 30S subunits on which protein synthesis initiation begins. The sequence is that of Translation initiation factor IF-3 from Borreliella burgdorferi (strain ATCC 35210 / DSM 4680 / CIP 102532 / B31) (Borrelia burgdorferi).